Reading from the N-terminus, the 330-residue chain is Free fatty acid receptor 2 (330 aa).

Residues 1–12 (MLPDWKSSLILM) are Extracellular-facing. The chain crosses the membrane as a helical span at residues 13–33 (AYIIIFLTGLPANLLALRAFV). The Cytoplasmic segment spans residues 34 to 41 (GRIRQPQP). A helical membrane pass occupies residues 42 to 62 (APVHILLLSLTLADLLLLLLL). Residues 63 to 84 (PFKIIEAASNFRWYLPKVVCAL) lie on the Extracellular side of the membrane. A helical transmembrane segment spans residues 85-105 (TSFGFYSSIYCSTWLLAGISI). Over 106–126 (ERYLGVAFPVQYKLSRRPLYG) the chain is Cytoplasmic. A helical transmembrane segment spans residues 127–147 (VIAALVAWVMSFGHCTIVIIV). Residues 148 to 173 (QYLNTTEQVRSGNEITCYENFTDNQL) are Extracellular-facing. 2 N-linked (GlcNAc...) asparagine glycosylation sites follow: Asn-151 and Asn-167. Residues 174–194 (DVVLPVRLELCLVLFFIPMAV) form a helical membrane-spanning segment. Residues 195 to 219 (TIFCYWRFVWIMLSQPLVGAQRRRR) are Cytoplasmic-facing. Residues 220-240 (AVGLAVVTLLNFLVCFGPYNV) traverse the membrane as a helical segment. Topologically, residues 241–255 (SHLVGYHQRKSPWWR) are extracellular. The helical transmembrane segment at 256-276 (SIAVVFSSLNASLDPLLFYFS) threads the bilayer. Residues 277-330 (SSVVRRAFGRGLQVLRNQGSSLLGRRGKDTAEGTNEDRGVGQGEGMPSSDFTTE) are Cytoplasmic-facing. The segment at 299 to 330 (LGRRGKDTAEGTNEDRGVGQGEGMPSSDFTTE) is disordered. Positions 302–315 (RGKDTAEGTNEDRG) are enriched in basic and acidic residues.

The protein belongs to the G-protein coupled receptor 1 family. Interacts with FCN1 (via Fibrinogen C-terminal domain). In terms of tissue distribution, expressed at relatively high levels in peripheral blood leukocytes and, to lesser extent, in spleen.

The protein localises to the cell membrane. Its function is as follows. G protein-coupled receptor that is activated by a major product of dietary fiber digestion, the short chain fatty acids (SCFAs), and that plays a role in the regulation of whole-body energy homeostasis and in intestinal immunity. In omnivorous mammals, the short chain fatty acids acetate, propionate and butyrate are produced primarily by the gut microbiome that metabolizes dietary fibers. SCFAs serve as a source of energy but also act as signaling molecules. That G protein-coupled receptor is probably coupled to the pertussis toxin-sensitive, G(i/o)-alpha family of G proteins but also to the Gq family. Its activation results in the formation of inositol 1,4,5-trisphosphate, the mobilization of intracellular calcium, the phosphorylation of the MAPK3/ERK1 and MAPK1/ERK2 kinases and the inhibition of intracellular cAMP accumulation. May play a role in glucose homeostasis by regulating the secretion of GLP-1, in response to short-chain fatty acids accumulating in the intestine. May also regulate the production of LEP/Leptin, a hormone acting on the central nervous system to inhibit food intake. Finally, may also regulate whole-body energy homeostasis through adipogenesis regulating both differentiation and lipid storage of adipocytes. In parallel to its role in energy homeostasis, may also mediate the activation of the inflammatory and immune responses by SCFA in the intestine, regulating the rapid production of chemokines and cytokines. May also play a role in the resolution of the inflammatory response and control chemotaxis in neutrophils. In addition to SCFAs, may also be activated by the extracellular lectin FCN1 in a process leading to activation of monocytes and inducing the secretion of interleukin-8/IL-8 in response to the presence of microbes. Among SCFAs, the fatty acids containing less than 6 carbons, the most potent activators are probably acetate, propionate and butyrate. Exhibits a SCFA-independent constitutive G protein-coupled receptor activity. The polypeptide is Free fatty acid receptor 2 (FFAR2) (Homo sapiens (Human)).